The sequence spans 518 residues: Pumilio homolog 14 (518 aa).

2 disordered regions span residues 26 to 46 (TMASSSSQPQPISSPFHQPEN) and 77 to 114 (VGQNGDSIHLPRRTNQVFTGSSSGGAGDDNGYLLPPMG). Residues 29–44 (SSSSQPQPISSPFHQP) show a composition bias toward low complexity. The 341-residue stretch at 178-518 (YTNRFGYEGY…GNKVLEKLNI (341 aa)) folds into the PUM-HD domain. One copy of the Pumilio 1; degenerate repeat lies at 206-235 (SAFAKDKEMSERLGMSIFQGTKETVDAIYN). 7 Pumilio repeats span residues 236–271 (GLIGDICELMVDPYGSDVVQLLMRRCSSEQIVQLVD), 275–313 (QQMFQFVNICIDSLGTNAIQVLLTCINERAKDQIPRIVD), 314–348 (VVRTVALQLSKSNHAIFVILACFRLFPLHCRLLLE), 349–387 (LIVQNCHQIAIDQHGCCLLQLCFNKDRVPNLEIRQRLIM), 388–423 (EAIANALRLCLNCYGNYVVQYIVELNNRYLIDALVR), 424–459 (QLIGNYAHLARNKYGSHAVQKLLKLRWIDSRVIVID), and 460–494 (LLREIDTLLLDPFGNYVIQTAWFVSKDDVRRMLRY).

It is found in the cytoplasm. Its subcellular location is the nucleus. In terms of biological role, sequence-specific RNA-binding protein that regulates translation and mRNA stability by binding the 3'-UTR of target mRNAs. The protein is Pumilio homolog 14 (APUM14) of Arabidopsis thaliana (Mouse-ear cress).